Reading from the N-terminus, the 62-residue chain is uncharacterized protein (62 aa).

This is an uncharacterized protein from Escherichia coli.